Consider the following 263-residue polypeptide: Ribonuclease HII (263 aa).

The RNase H type-2 domain occupies 71 to 262 (KAIAGIDEVG…VKSMCCDSTN (192 aa)). Aspartate 77, glutamate 78, and aspartate 172 together coordinate a divalent metal cation.

This sequence belongs to the RNase HII family. The cofactor is Mn(2+). Requires Mg(2+) as cofactor.

The protein localises to the cytoplasm. It carries out the reaction Endonucleolytic cleavage to 5'-phosphomonoester.. Functionally, endonuclease that specifically degrades the RNA of RNA-DNA hybrids. This Streptococcus pyogenes serotype M1 protein is Ribonuclease HII.